A 429-amino-acid polypeptide reads, in one-letter code: Serum response factor-binding protein 1 (429 aa).

Ala2 bears the N-acetylalanine mark. 2 coiled-coil regions span residues 42–67 and 108–146; these read KGTEDALLKNQRRAQRLLEEIHAMKE and LLKKKIDVLKAAVQAFKEARQNVAEVESSKNASEDNHSE. 2 disordered regions span residues 131–157 and 176–429; these read AEVESSKNASEDNHSENTLYSNDNGSN and LAKK…TFDD. Residues 146–157 are compositionally biased toward polar residues; it reads ENTLYSNDNGSN. Residues 183–195 show a composition bias toward basic and acidic residues; sequence NSKEKIAKMEHGP. A Glycyl lysine isopeptide (Lys-Gly) (interchain with G-Cter in SUMO2) cross-link involves residue Lys190. Ser203, Ser205, Ser264, Ser279, and Ser281 each carry phosphoserine. Residues 249–265 show a composition bias toward acidic residues; that stretch reads GGEEFCEEEKEYFDDST. Basic and acidic residues predominate over residues 296–341; that stretch reads KESSCHSSVKEQKPLEKVFLKEDTGETHGDTRNDKIKPSTETRKLE. A Glycyl lysine isopeptide (Lys-Gly) (interchain with G-Cter in SUMO2) cross-link involves residue Lys316. Phosphoserine occurs at positions 349, 351, and 367. Basic and acidic residues predominate over residues 357-367; it reads NFKEQAPKTRS. Residues 373 to 383 show a composition bias toward polar residues; that stretch reads NEPQIKNQFNK.

Interacts with SRF. Forms complexes with SRF and SRF cofactors ARID2, MYOCD and NKX2-5. Interacts with the N-terminus of SLC2A4. In terms of tissue distribution, abundantly expressed in heart and skeletal muscle, and at much lower levels in brain and lung.

It localises to the cytoplasm. The protein localises to the perinuclear region. In terms of biological role, may be involved in regulating transcriptional activation of cardiac genes during the aging process. May play a role in biosynthesis and/or processing of SLC2A4 in adipose cells. The polypeptide is Serum response factor-binding protein 1 (Homo sapiens (Human)).